Reading from the N-terminus, the 289-residue chain is MKLLLAGTPEFSVPIFEELIKKFEIVAIITQPDKPKNRGYSLEASPVKKLAQKYDIKVYDPEKISTIYDQIKDLEFDFFLTAAYGQYIPEKILNLPKIASLNVHGSLLPKYRGAAPIQHALLNGDDETGISLIYMTKKMDAGNILKIAKIKLNGNENADDLFLQMSKIASKNIVLWLEQIYQKDFSEIVQDEEKVSLSPKLLKEDALLEVDKLSVKDFINKVRAFSLNPGAYLIKDGKRVKIFRATTSLVKNAFVVEVQGQKIYCYEYQFEGKKRVKLNFNLLFFNSVI.

Residue 106-109 (SLLP) coordinates (6S)-5,6,7,8-tetrahydrofolate.

This sequence belongs to the Fmt family.

It carries out the reaction L-methionyl-tRNA(fMet) + (6R)-10-formyltetrahydrofolate = N-formyl-L-methionyl-tRNA(fMet) + (6S)-5,6,7,8-tetrahydrofolate + H(+). Its function is as follows. Attaches a formyl group to the free amino group of methionyl-tRNA(fMet). The formyl group appears to play a dual role in the initiator identity of N-formylmethionyl-tRNA by promoting its recognition by IF2 and preventing the misappropriation of this tRNA by the elongation apparatus. In Mycoplasmopsis pulmonis (strain UAB CTIP) (Mycoplasma pulmonis), this protein is Methionyl-tRNA formyltransferase.